Consider the following 188-residue polypeptide: Adenine phosphoribosyltransferase (188 aa).

This sequence belongs to the purine/pyrimidine phosphoribosyltransferase family. Homodimer.

It is found in the cytoplasm. The enzyme catalyses AMP + diphosphate = 5-phospho-alpha-D-ribose 1-diphosphate + adenine. Its pathway is purine metabolism; AMP biosynthesis via salvage pathway; AMP from adenine: step 1/1. In terms of biological role, catalyzes a salvage reaction resulting in the formation of AMP, that is energically less costly than de novo synthesis. The chain is Adenine phosphoribosyltransferase from Burkholderia multivorans (strain ATCC 17616 / 249).